The following is a 433-amino-acid chain: GTPase Obg (433 aa).

Residues 4–162 (EDFVDRVTIF…RWLELELKLL (159 aa)) enclose the Obg domain. Residues 163-334 (ADAGLIGFPN…LKQKIFEIVG (172 aa)) enclose the OBG-type G domain. GTP is bound by residues 169–176 (GFPNVGKS), 194–198 (FTTLV), 216–219 (DIPG), 286–289 (NKID), and 315–317 (SAL). 2 residues coordinate Mg(2+): S176 and T196. The OCT domain maps to 356–433 (TKIEERFDFE…IGQYSFEYKE (78 aa)).

This sequence belongs to the TRAFAC class OBG-HflX-like GTPase superfamily. OBG GTPase family. Monomer. Mg(2+) is required as a cofactor.

It is found in the cytoplasm. In terms of biological role, an essential GTPase which binds GTP, GDP and possibly (p)ppGpp with moderate affinity, with high nucleotide exchange rates and a fairly low GTP hydrolysis rate. Plays a role in control of the cell cycle, stress response, ribosome biogenesis and in those bacteria that undergo differentiation, in morphogenesis control. This chain is GTPase Obg, found in Pseudothermotoga lettingae (strain ATCC BAA-301 / DSM 14385 / NBRC 107922 / TMO) (Thermotoga lettingae).